We begin with the raw amino-acid sequence, 154 residues long: Ribosomal RNA large subunit methyltransferase H (154 aa).

S-adenosyl-L-methionine contacts are provided by Leu-70 and Gly-102.

It belongs to the RNA methyltransferase RlmH family. In terms of assembly, homodimer.

It localises to the cytoplasm. The enzyme catalyses pseudouridine(1915) in 23S rRNA + S-adenosyl-L-methionine = N(3)-methylpseudouridine(1915) in 23S rRNA + S-adenosyl-L-homocysteine + H(+). Its function is as follows. Specifically methylates the pseudouridine at position 1915 (m3Psi1915) in 23S rRNA. The protein is Ribosomal RNA large subunit methyltransferase H of Hyphomonas neptunium (strain ATCC 15444).